The sequence spans 78 residues: Beta-defensin 12 (78 aa).

Residues 1-27 form the signal peptide; sequence MALSREVFYFGFALFFIVVELPSGSWA. Cystine bridges form between C46/C73, C53/C67, and C57/C74.

It belongs to the beta-defensin family. In terms of tissue distribution, only expressed in epididymis (caput, corpus and cauda).

Its subcellular location is the secreted. Functionally, has antibacterial activity. The polypeptide is Beta-defensin 12 (Defb12) (Mus musculus (Mouse)).